Here is a 254-residue protein sequence, read N- to C-terminus: Large ribosomal subunit protein uL2 (254 aa).

It belongs to the universal ribosomal protein uL2 family. As to quaternary structure, component of the large ribosomal subunit. Mature ribosomes consist of a small (40S) and a large (60S) subunit. The 40S subunit contains about 32 different proteins and 1 molecule of RNA (18S). The 60S subunit contains 45 different proteins and 3 molecules of RNA (25S, 5.8S and 5S).

It is found in the cytoplasm. In terms of biological role, component of the ribosome, a large ribonucleoprotein complex responsible for the synthesis of proteins in the cell. The small ribosomal subunit (SSU) binds messenger RNAs (mRNAs) and translates the encoded message by selecting cognate aminoacyl-transfer RNA (tRNA) molecules. The large subunit (LSU) contains the ribosomal catalytic site termed the peptidyl transferase center (PTC), which catalyzes the formation of peptide bonds, thereby polymerizing the amino acids delivered by tRNAs into a polypeptide chain. The nascent polypeptides leave the ribosome through a tunnel in the LSU and interact with protein factors that function in enzymatic processing, targeting, and the membrane insertion of nascent chains at the exit of the ribosomal tunnel. The sequence is that of Large ribosomal subunit protein uL2 from Candida albicans (strain SC5314 / ATCC MYA-2876) (Yeast).